We begin with the raw amino-acid sequence, 706 residues long: Zinc finger and BTB domain-containing protein 17 (706 aa).

One can recognise a BTB domain in the interval leucine 1 to valine 12. The segment at threonine 32 to arginine 194 is disordered. Over residues glutamate 67 to proline 78 the composition is skewed to basic and acidic residues. Over residues alanine 90 to alanine 106 the composition is skewed to low complexity. A compositionally biased stretch (acidic residues) spans glycine 134–glutamate 148. Polar residues predominate over residues serine 170 to glutamate 182. 13 consecutive C2H2-type zinc fingers follow at residues histidine 205–histidine 227, phenylalanine 233–histidine 255, tyrosine 261–histidine 283, tyrosine 289–histidine 311, tyrosine 317–histidine 339, histidine 345–histidine 367, leucine 373–histidine 395, tyrosine 401–histidine 423, lysine 427–histidine 450, tyrosine 457–histidine 479, histidine 485–histidine 507, phenylalanine 513–histidine 536, and tyrosine 618–histidine 640. Residues proline 680–glutamate 706 form a disordered region. Low complexity predominate over residues alanine 687–alanine 698.

This sequence belongs to the krueppel C2H2-type zinc-finger protein family.

It localises to the nucleus. Transcription factor that can function as an activator or repressor depending on its binding partners, and by targeting negative regulators of cell cycle progression. Plays a critical role in early lymphocyte development, where it is essential to prevent apoptosis in lymphoid precursors, allowing them to survive in response to IL7 and undergo proper lineage commitment. Has been shown to bind to the promoters of adenovirus major late protein and cyclin D1 and activate transcription. Required for early embryonic development during gastrulation. Represses RB1 transcription. The protein is Zinc finger and BTB domain-containing protein 17 (ZBTB17) of Gallus gallus (Chicken).